Consider the following 350-residue polypeptide: S-adenosylmethionine:tRNA ribosyltransferase-isomerase (350 aa).

The protein belongs to the QueA family. Monomer.

The protein resides in the cytoplasm. It catalyses the reaction 7-aminomethyl-7-carbaguanosine(34) in tRNA + S-adenosyl-L-methionine = epoxyqueuosine(34) in tRNA + adenine + L-methionine + 2 H(+). It participates in tRNA modification; tRNA-queuosine biosynthesis. In terms of biological role, transfers and isomerizes the ribose moiety from AdoMet to the 7-aminomethyl group of 7-deazaguanine (preQ1-tRNA) to give epoxyqueuosine (oQ-tRNA). The polypeptide is S-adenosylmethionine:tRNA ribosyltransferase-isomerase (Bacillus cereus (strain 03BB102)).